A 444-amino-acid chain; its full sequence is ATP-dependent protease ATPase subunit HslU (444 aa).

ATP contacts are provided by residues Ile20 and 62–67; that span reads GVGKTE. Residues 130-158 are disordered; it reads EDRILDALVPPPRGASGEPERGEDNSARQ. ATP is bound by residues Asp257, Glu322, and Arg394.

This sequence belongs to the ClpX chaperone family. HslU subfamily. A double ring-shaped homohexamer of HslV is capped on each side by a ring-shaped HslU homohexamer. The assembly of the HslU/HslV complex is dependent on binding of ATP.

Its subcellular location is the cytoplasm. Functionally, ATPase subunit of a proteasome-like degradation complex; this subunit has chaperone activity. The binding of ATP and its subsequent hydrolysis by HslU are essential for unfolding of protein substrates subsequently hydrolyzed by HslV. HslU recognizes the N-terminal part of its protein substrates and unfolds these before they are guided to HslV for hydrolysis. The protein is ATP-dependent protease ATPase subunit HslU of Bordetella bronchiseptica (strain ATCC BAA-588 / NCTC 13252 / RB50) (Alcaligenes bronchisepticus).